We begin with the raw amino-acid sequence, 181 residues long: ADP-ribosylation factor 1 (181 aa).

A lipid anchor (N-myristoyl glycine) is attached at G2. Residues 3–16 (NMFANLFKGLFGKK) form an important for the stable binding to the membranes region. GTP contacts are provided by residues 24 to 32 (GLDAAGKTT), 126 to 129 (NKQD), and A160.

Belongs to the small GTPase superfamily. Arf family.

It localises to the golgi apparatus membrane. The catalysed reaction is GTP + H2O = GDP + phosphate + H(+). Its activity is regulated as follows. Alternates between an inactive GDP-bound form and an active GTP-bound form. Activated by a guanine nucleotide-exchange factor (GEF) and inactivated by GTPase-activating protein (GAP). Small GTPase involved in protein trafficking between different compartments. Modulates vesicle budding and uncoating within the Golgi complex. In its GTP-bound form, triggers the recruitment of coatomer proteins to the Golgi membrane. The hydrolysis of ARF1-bound GTP, which is mediated by ARFGAPs proteins, is required for dissociation of coat proteins from Golgi membranes and vesicles. The chain is ADP-ribosylation factor 1 (arf1) from Xenopus laevis (African clawed frog).